We begin with the raw amino-acid sequence, 204 residues long: Outer-membrane lipoprotein carrier protein (204 aa).

The signal sequence occupies residues 1 to 21 (MKKIAIVGALLTSFVASSVWA). Residues 169-204 (QRSSYQLKSQQNGAIDASKFTFTPPQGVTVDDQRNK) are disordered. Polar residues predominate over residues 171 to 181 (SSYQLKSQQNG).

The protein belongs to the LolA family. As to quaternary structure, monomer.

It localises to the periplasm. Its function is as follows. Participates in the translocation of lipoproteins from the inner membrane to the outer membrane. Only forms a complex with a lipoprotein if the residue after the N-terminal Cys is not an aspartate (The Asp acts as a targeting signal to indicate that the lipoprotein should stay in the inner membrane). This Enterobacter sp. (strain 638) protein is Outer-membrane lipoprotein carrier protein.